A 258-amino-acid polypeptide reads, in one-letter code: UPF0246 protein HS_0482 (258 aa).

This sequence belongs to the UPF0246 family.

This is UPF0246 protein HS_0482 from Histophilus somni (strain 129Pt) (Haemophilus somnus).